We begin with the raw amino-acid sequence, 2364 residues long: Cytotoxin-L (2364 aa).

The tract at residues 1 to 91 (MNLVNKAQLQ…EVLELKNNSL (91 aa)) is four-helical bundle. A GT44 domain is found at 96-468 (KNLHFIWIGG…APDVRSTINL (373 aa)). The tract at residues 96–468 (KNLHFIWIGG…APDVRSTINL (373 aa)) is glucosyltransferase region. UDP-alpha-D-glucose is bound by residues 101-103 (IWI), N139, 265-270 (LAAASD), and 286-288 (DVD). D288, E515, and S518 together coordinate Mg(2+). Residue 518 to 520 (SLW) participates in UDP-alpha-D-glucose binding. Positions 544 to 799 (GEDDNLDFAQ…KSKYLHELST (256 aa)) are autoprocessing region. Zn(2+) is bound by residues E545 and D546. The region spanning 567-774 (LSSMKTRNKE…EESIIKDISS (208 aa)) is the Peptidase C80 domain. 1D-myo-inositol hexakisphosphate is bound by residues Y577, K600, and K647. A Zn(2+)-binding site is contributed by H653. H653 functions as the For protease activity in the catalytic mechanism. C698 acts as the Nucleophile; for protease activity in catalysis. Zn(2+) is bound at residue H757. Residues K764, K775, and K792 each contribute to the 1D-myo-inositol hexakisphosphate site. The interval 800-1500 (LLQEIRNNAN…ESIIRNIYMP (701 aa)) is translocation region. Interaction with host SEMA6A and SEMA6B regions lie at residues 1433 to 1438 (CMKLIE), 1466 to 1471 (DNETKY), 1484 to 1495 (FTAEFSNESIIR), 1504 to 1511 (NLFIYSSK), and 1596 to 1601 (YNNLDP). Cell wall-binding repeat units follow at residues 1813–1832 (EFGL…FGNM), 1833–1852 (VSGL…PKNN), 1854–1873 (ITGF…TKSG), 1876–1895 (SIGE…QGIL), 1926–1945 (FIGK…NYRA), 1946–1965 (AVEW…KTGE), 1967–1986 (LKGL…NGIM), 1987–2006 (QTGF…DGVM), 2007–2026 (QVGY…NGER), 2057–2076 (YNGI…SNTA), 2077–2097 (VVGW…NTAE), 2099–2118 (CIGL…NGIR), 2119–2138 (QLGF…SGKI), 2139–2158 (ELGY…SGLV), 2209–2224 (ETGW…YFDP), 2227–2249 (KKAY…NGIM), 2250–2269 (RTGL…DGKM), 2270–2289 (QFGY…DGKM), 2320–2339 (YTGW…EYIA), and 2340–2359 (ATGS…DTAE). The receptor-binding (CROPS) region stretch occupies residues 1835-2364 (GLIYINDSLY…PDTAELVVSE (530 aa)).

This sequence belongs to the clostridial glucosylating toxin (LCGT) family. In terms of assembly, homomultimer; forms an inactive homomultimer at pH 8, which dissociates at pH 4, leading to cytotoxicity. Interacts with host SEMA6A; interaction promotes toxin entry into host cell. Interacts with host SEMA6B; interaction promotes toxin entry into host cell. Zn(2+) serves as cofactor. The cofactor is Mn(2+). Mg(2+) is required as a cofactor. Undergoes autocatalytic cleavage to release the N-terminal part (Glucosyltransferase TcsL), which constitutes the active part of the toxin, in the host cytosol. 1D-myo-inositol hexakisphosphate-binding (InsP6) activates the peptidase C80 domain and promotes autoprocessing.

It is found in the secreted. The protein localises to the host endosome membrane. It localises to the host cytoplasm. Its subcellular location is the host cytosol. The protein resides in the host cell membrane. The enzyme catalyses L-threonyl-[protein] + UDP-alpha-D-glucose = 3-O-(alpha-D-glucosyl)-L-threonyl-[protein] + UDP + H(+). With respect to regulation, protease activity is activated upon binding to 1D-myo-inositol hexakisphosphate (InsP6), which induces conformational reorganization. In terms of biological role, precursor of a cytotoxin that targets the vascular endothelium, inducing an anti-inflammatory effect and resulting in lethal toxic shock syndrome. TcsL constitutes the main toxin that mediates the pathology of P.sordellii infection, an anaerobic Gram-positive bacterium found in soil and in the gastrointestinal and vaginal tracts of animals and humans; although the majority of carriers are asymptomatic, pathogenic P.sordellii infections arise rapidly and are highly lethal. This form constitutes the precursor of the toxin: it enters into host cells and mediates autoprocessing to release the active toxin (Glucosyltransferase TcsL) into the host cytosol. Targets vascular endothelium by binding to the semaphorin proteins SEMA6A and SEMA6B, and enters host cells via clathrin-mediated endocytosis. Once entered into host cells, acidification in the endosome promotes the membrane insertion of the translocation region and formation of a pore, leading to translocation of the GT44 and peptidase C80 domains across the endosomal membrane. This activates the peptidase C80 domain and autocatalytic processing, releasing the N-terminal part (Glucosyltransferase TcsL), which constitutes the active part of the toxin, in the cytosol. Its function is as follows. Active form of the toxin, which is released into the host cytosol following autoprocessing and inactivates small GTPases. Acts by mediating monoglucosylation of small GTPases of the Ras (H-Ras/HRAS, K-Ras/KRAS and N-Ras/NRAS) family in host cells at the conserved threonine residue located in the switch I region ('Thr-37/35'), using UDP-alpha-D-glucose as the sugar donor. Also able to catalyze monoglucosylation of some members of the Rho family (Rac1 and Rap2A), but with less efficiency than with Ras proteins. Monoglucosylation of host small GTPases completely prevents the recognition of the downstream effector, blocking the GTPases in their inactive form and leading to apoptosis. Induces an anti-inflammatory effect, mainly by inactivating Ras proteins which results in blockage of the cell cycle and killing of immune cells. The absence or moderate local inflammatory response allows C.sordellii spreading in deep tissues, production of toxin which is released in the general circulation and causes a toxic shock syndrome. The sequence is that of Cytotoxin-L from Paraclostridium sordellii (strain ATCC 9714 / DSM 2141 / JCM 3814 / LMG 15708 / NCIMB 10717 / 211) (Clostridium sordellii).